A 345-amino-acid polypeptide reads, in one-letter code: Phenylalanine--tRNA ligase alpha subunit (345 aa).

Residue Glu-253 participates in Mg(2+) binding.

This sequence belongs to the class-II aminoacyl-tRNA synthetase family. Phe-tRNA synthetase alpha subunit type 1 subfamily. As to quaternary structure, tetramer of two alpha and two beta subunits. The cofactor is Mg(2+).

The protein localises to the cytoplasm. The enzyme catalyses tRNA(Phe) + L-phenylalanine + ATP = L-phenylalanyl-tRNA(Phe) + AMP + diphosphate + H(+). This is Phenylalanine--tRNA ligase alpha subunit from Nitratidesulfovibrio vulgaris (strain DSM 19637 / Miyazaki F) (Desulfovibrio vulgaris).